The following is a 68-amino-acid chain: Large ribosomal subunit protein bL31 (68 aa).

Zn(2+)-binding residues include C17, C19, C37, and C40.

This sequence belongs to the bacterial ribosomal protein bL31 family. Type A subfamily. As to quaternary structure, part of the 50S ribosomal subunit. The cofactor is Zn(2+).

Its function is as follows. Binds the 23S rRNA. This Dehalococcoides mccartyi (strain CBDB1) protein is Large ribosomal subunit protein bL31.